The chain runs to 179 residues: MSRIGKVPVSVPGGVHVRVSSGVVEVEGPKGVLSCAFLPVVTVRVEQEYVIVARCDDSKRARACHGLYRKLLSNMVVGVSEGFSKTLVITGIGYRAEVQGRVLVMALGYSNDFTVLIPSGIEVRVESSTRVIVSGVSKERVGEFAAQLRRLRLPEAYKGKGIRYDYETIVRKVGKSGVK.

This sequence belongs to the universal ribosomal protein uL6 family. As to quaternary structure, part of the 50S ribosomal subunit.

Functionally, this protein binds to the 23S rRNA, and is important in its secondary structure. It is located near the subunit interface in the base of the L7/L12 stalk, and near the tRNA binding site of the peptidyltransferase center. The protein is Large ribosomal subunit protein uL6 of Treponema pallidum (strain Nichols).